An 816-amino-acid polypeptide reads, in one-letter code: Probable disease resistance protein At4g33300 (816 aa).

Residues 1 to 149 enclose the RPW8 domain; the sequence is MAITDFFAGE…SLDRVIQQVG (149 aa). Residues 95–111 are a coiled coil; sequence TLARKMEKLEKTISNFL. In terms of domain architecture, NB-ARC spans 191–443; the sequence is VKKMMFESQG…LDVLINIWIE (253 aa). Residue 207 to 214 participates in ATP binding; the sequence is GMGGVGKT. A coiled-coil region spans residues 399-415; that stretch reads SRLLRQMEASLDNLDQT. LRR repeat units follow at residues 681–704, 705–727, 729–751, and 753–774; these read SLSC…SKLQ, ALEI…ICEL, GLKY…IGKL, and KLEK…AVSL.

It belongs to the disease resistance NB-LRR family.

Its function is as follows. Probable disease resistance protein. This chain is Probable disease resistance protein At4g33300, found in Arabidopsis thaliana (Mouse-ear cress).